A 315-amino-acid chain; its full sequence is Heme oxygenase 2 (315 aa).

A compositionally biased stretch (acidic residues) spans 1-12; the sequence is MSSEVETSEGVD. A disordered region spans residues 1-28; the sequence is MSSEVETSEGVDESEKNSMAPEKENHTK. At serine 2 the chain carries N-acetylserine. Position 2 is a phosphoserine (serine 2). The Cytoplasmic segment spans residues 2 to 294; sequence SSEVETSEGV…TTVAVLRKPS (293 aa). Over residues 13–28 the composition is skewed to basic and acidic residues; it reads ESEKNSMAPEKENHTK. The heme b site is built by histidine 44, tyrosine 153, lysine 198, and arginine 202. HRM repeat units follow at residues 263-268 and 280-285; these read KCPFYA and NCPFQT. An S-nitrosocysteine mark is found at cysteine 264 and cysteine 281. A helical; Anchor for type IV membrane protein membrane pass occupies residues 295-315; the sequence is LQLILAASVALVAGLLAWYYM.

It belongs to the heme oxygenase family. In terms of processing, a soluble form arises by proteolytic removal of the membrane anchor. S-nitrosylated by BLVRB. Ubiquitous.

It is found in the microsome membrane. Its subcellular location is the endoplasmic reticulum membrane. It carries out the reaction heme b + 3 reduced [NADPH--hemoprotein reductase] + 3 O2 = biliverdin IXalpha + CO + Fe(2+) + 3 oxidized [NADPH--hemoprotein reductase] + 3 H2O + H(+). Functionally, catalyzes the oxidative cleavage of heme at the alpha-methene bridge carbon, released as carbon monoxide (CO), to generate biliverdin IXalpha, while releasing the central heme iron chelate as ferrous iron. This Mus musculus (Mouse) protein is Heme oxygenase 2 (Hmox2).